A 358-amino-acid chain; its full sequence is Biotin synthase (358 aa).

The 229-residue stretch at 44-272 (NRVRLNYLVN…DSEVRAAAGR (229 aa)) folds into the Radical SAM core domain. C59, C63, and C66 together coordinate [4Fe-4S] cluster. 4 residues coordinate [2Fe-2S] cluster: C103, C136, C196, and R267.

It belongs to the radical SAM superfamily. Biotin synthase family. Homodimer. [4Fe-4S] cluster is required as a cofactor. It depends on [2Fe-2S] cluster as a cofactor.

It carries out the reaction (4R,5S)-dethiobiotin + (sulfur carrier)-SH + 2 reduced [2Fe-2S]-[ferredoxin] + 2 S-adenosyl-L-methionine = (sulfur carrier)-H + biotin + 2 5'-deoxyadenosine + 2 L-methionine + 2 oxidized [2Fe-2S]-[ferredoxin]. It functions in the pathway cofactor biosynthesis; biotin biosynthesis; biotin from 7,8-diaminononanoate: step 2/2. Its function is as follows. Catalyzes the conversion of dethiobiotin (DTB) to biotin by the insertion of a sulfur atom into dethiobiotin via a radical-based mechanism. This chain is Biotin synthase, found in Cutibacterium acnes (strain DSM 16379 / KPA171202) (Propionibacterium acnes).